Here is a 788-residue protein sequence, read N- to C-terminus: DNA replication helicase (788 aa).

73–80 is an ATP binding site; that stretch reads GTAGAGKS.

Belongs to the herpesviridae helicase family. As to quaternary structure, associates with the primase and the primase-associated factor to form the helicase-primase complex.

It is found in the host nucleus. Component of the helicase/primase complex. Unwinds the DNA at the replication forks and generates single-stranded DNA for both leading and lagging strand synthesis. The primase synthesizes short RNA primers on the lagging strand that the polymerase elongates using dNTPs. Possesses helicase-like motifs and therefore may act as the helicase subunit of the complex. In Homo sapiens (Human), this protein is DNA replication helicase.